A 542-amino-acid chain; its full sequence is Phenylalanine--tRNA ligase beta subunit (542 aa).

In terms of domain architecture, B5 spans Leu269 to Pro344. Mg(2+)-binding residues include Asp322, Asp328, Glu331, and Glu332.

This sequence belongs to the phenylalanyl-tRNA synthetase beta subunit family. Type 2 subfamily. Tetramer of two alpha and two beta subunits. The cofactor is Mg(2+).

The protein localises to the cytoplasm. It carries out the reaction tRNA(Phe) + L-phenylalanine + ATP = L-phenylalanyl-tRNA(Phe) + AMP + diphosphate + H(+). This is Phenylalanine--tRNA ligase beta subunit from Sulfolobus acidocaldarius (strain ATCC 33909 / DSM 639 / JCM 8929 / NBRC 15157 / NCIMB 11770).